Here is a 353-residue protein sequence, read N- to C-terminus: Inactive ADP-ribosyltransferase ARH2 (353 aa).

Position 27 is a phosphoserine (S27).

The protein belongs to the ADP-ribosylglycohydrolase family.

Its subcellular location is the cytoplasm. It localises to the myofibril. It is found in the sarcomere. Required for myofibril assembly and outgrowth of the cardiac chambers in the developing heart. Appears to be catalytically inactive, showing no activity against O-acetyl-ADP-ribose. This is Inactive ADP-ribosyltransferase ARH2 (Adprhl1) from Rattus norvegicus (Rat).